Here is a 414-residue protein sequence, read N- to C-terminus: Patatin-like protein 1 (414 aa).

A PNPLA domain is found at 22 to 228; it reads LSLDGGGVRG…TANNPTLVAM (207 aa). The GXGXXG signature appears at 26-31; the sequence is GGGVRG. The GXSXG motif lies at 64–68; it reads GTSTG. Residue serine 66 is the Nucleophile of the active site. The Proton acceptor role is filled by aspartate 215. The short motif at 215–217 is the DGA/G element; that stretch reads DGA. Position 399 is a phosphoserine (serine 399).

Belongs to the patatin family. Post-translationally, phosphorylated at Ser-399 by CPK3. Phosphorylation enhances PLP1 activity towards phosphatidylcholine. In terms of tissue distribution, expressed specifically in roots and root hairs.

The protein resides in the cytoplasm. Possesses non-specific lipolytic acyl hydrolase (LAH) activity. Catalyzes the hydrolysis of the neutral lipids monogalactosyldiacylglycerol (MGDG), digalactosyldiacylglycerol (DGDG) and phosphatidylglycerol (PG), and less efficiently the polar lipids phosphatidylcholine (PC) and phosphatidylinositol (PI), but not the storage lipid triacylglycerol (TAG). May play a role in root development. The sequence is that of Patatin-like protein 1 (PLP1) from Arabidopsis thaliana (Mouse-ear cress).